The following is a 447-amino-acid chain: ATP-dependent protease ATPase subunit HslU (447 aa).

ATP-binding positions include I17, 59-64 (GVGKTE), D256, E321, and R393.

It belongs to the ClpX chaperone family. HslU subfamily. In terms of assembly, a double ring-shaped homohexamer of HslV is capped on each side by a ring-shaped HslU homohexamer. The assembly of the HslU/HslV complex is dependent on binding of ATP.

The protein resides in the cytoplasm. ATPase subunit of a proteasome-like degradation complex; this subunit has chaperone activity. The binding of ATP and its subsequent hydrolysis by HslU are essential for unfolding of protein substrates subsequently hydrolyzed by HslV. HslU recognizes the N-terminal part of its protein substrates and unfolds these before they are guided to HslV for hydrolysis. This is ATP-dependent protease ATPase subunit HslU from Stutzerimonas stutzeri (strain A1501) (Pseudomonas stutzeri).